A 207-amino-acid chain; its full sequence is MPKVQILNQQGENVGELELNEAIFGVDVNEHVVYEVVKNQLANKRQGTQSAKTRSEVRGGGRKPWRQKGTGRARQGSIRSPQWRGGGVVFAPKPRDYSYAVPKKVRRLAIKSVLTEKVNDNEMIVLDKLNLDAISTKKAVEVLKNIKADKKALVVIDKNDDTLYRSFRNIENVAICEAKLINVYDCLKYNSLVITTDAVKILEEVFQ.

The segment at Lys-44 to Pro-81 is disordered. The segment covering Gly-60–Gly-71 has biased composition (basic residues).

This sequence belongs to the universal ribosomal protein uL4 family. As to quaternary structure, part of the 50S ribosomal subunit.

Functionally, one of the primary rRNA binding proteins, this protein initially binds near the 5'-end of the 23S rRNA. It is important during the early stages of 50S assembly. It makes multiple contacts with different domains of the 23S rRNA in the assembled 50S subunit and ribosome. In terms of biological role, forms part of the polypeptide exit tunnel. The sequence is that of Large ribosomal subunit protein uL4 from Finegoldia magna (strain ATCC 29328 / DSM 20472 / WAL 2508) (Peptostreptococcus magnus).